The following is a 242-amino-acid chain: MQLFHFHTPEQVPPAGIPACAVAIDVLRATTTIAAALAAGAEAVEVFADLQSLQAASRSWPASKRLLAGERGGKTVTGFDLGNSPREYTPERVRDQRIFMSTTNGTRTLQRLERIPVVITAALVNLGAVVEFLRRGAFAEVWLVGSGWEGAFALEDTACAGAVLHRLGCSWEQLGNDEAVAALALYQTWQDNLLGLLRRSSHGQRLLAISPENDSDLAYCAKLDRLSVVPQQVQPGVLALAG.

Belongs to the ComB family. Mg(2+) serves as cofactor.

It carries out the reaction (2R)-O-phospho-3-sulfolactate + H2O = (2R)-3-sulfolactate + phosphate. This is Probable 2-phosphosulfolactate phosphatase from Synechococcus sp. (strain JA-3-3Ab) (Cyanobacteria bacterium Yellowstone A-Prime).